Here is a 388-residue protein sequence, read N- to C-terminus: Succinate--CoA ligase [ADP-forming] subunit beta (388 aa).

The ATP-grasp domain maps to 9 to 244; sequence KEIFARYGLP…PTQESELEVK (236 aa). ATP contacts are provided by residues Lys-46, 53 to 55, Glu-99, Thr-102, and Glu-107; that span reads GRG. Residues Asn-199 and Asp-213 each coordinate Mg(2+). Substrate-binding positions include Asn-264 and 321–323; that span reads GIL.

This sequence belongs to the succinate/malate CoA ligase beta subunit family. In terms of assembly, heterotetramer of two alpha and two beta subunits. Requires Mg(2+) as cofactor.

The catalysed reaction is succinate + ATP + CoA = succinyl-CoA + ADP + phosphate. The enzyme catalyses GTP + succinate + CoA = succinyl-CoA + GDP + phosphate. The protein operates within carbohydrate metabolism; tricarboxylic acid cycle; succinate from succinyl-CoA (ligase route): step 1/1. In terms of biological role, succinyl-CoA synthetase functions in the citric acid cycle (TCA), coupling the hydrolysis of succinyl-CoA to the synthesis of either ATP or GTP and thus represents the only step of substrate-level phosphorylation in the TCA. The beta subunit provides nucleotide specificity of the enzyme and binds the substrate succinate, while the binding sites for coenzyme A and phosphate are found in the alpha subunit. The sequence is that of Succinate--CoA ligase [ADP-forming] subunit beta from Persephonella marina (strain DSM 14350 / EX-H1).